Reading from the N-terminus, the 342-residue chain is N-acetyl-gamma-glutamyl-phosphate reductase (342 aa).

The active site involves Cys149.

This sequence belongs to the NAGSA dehydrogenase family. Type 1 subfamily.

The protein localises to the cytoplasm. The catalysed reaction is N-acetyl-L-glutamate 5-semialdehyde + phosphate + NADP(+) = N-acetyl-L-glutamyl 5-phosphate + NADPH + H(+). Its pathway is amino-acid biosynthesis; L-arginine biosynthesis; N(2)-acetyl-L-ornithine from L-glutamate: step 3/4. Functionally, catalyzes the NADPH-dependent reduction of N-acetyl-5-glutamyl phosphate to yield N-acetyl-L-glutamate 5-semialdehyde. The chain is N-acetyl-gamma-glutamyl-phosphate reductase from Nitrosomonas europaea (strain ATCC 19718 / CIP 103999 / KCTC 2705 / NBRC 14298).